Here is a 156-residue protein sequence, read N- to C-terminus: Small ribosomal subunit protein uS7 (156 aa).

The protein belongs to the universal ribosomal protein uS7 family. Part of the 30S ribosomal subunit. Contacts proteins S9 and S11.

In terms of biological role, one of the primary rRNA binding proteins, it binds directly to 16S rRNA where it nucleates assembly of the head domain of the 30S subunit. Is located at the subunit interface close to the decoding center, probably blocks exit of the E-site tRNA. This chain is Small ribosomal subunit protein uS7, found in Pseudomonas entomophila (strain L48).